The following is a 331-amino-acid chain: Inositol 2-dehydrogenase (331 aa).

It belongs to the Gfo/Idh/MocA family. As to quaternary structure, homotetramer.

It carries out the reaction myo-inositol + NAD(+) = scyllo-inosose + NADH + H(+). Its function is as follows. Involved in the oxidation of myo-inositol (MI) to 2-keto-myo-inositol (2KMI or 2-inosose). This Renibacterium salmoninarum (strain ATCC 33209 / DSM 20767 / JCM 11484 / NBRC 15589 / NCIMB 2235) protein is Inositol 2-dehydrogenase.